The primary structure comprises 159 residues: MNITIVSVGKLKEKYLKMGIDEYVKRLGGYAKIDLIEVADEKAPEQLSDAEMEIVKKKEGERILAKISTDTYVIALAINGKMKTSEQMAADLESLMTYGKSKIAFVIGGSLGLHEDVLKRADEQQSFGKMTLPHQLMKLVLVEQVYRSFRIMKGEPYHK.

Residues Leu76, Gly108, and Phe127 to Leu132 contribute to the S-adenosyl-L-methionine site.

It belongs to the RNA methyltransferase RlmH family. As to quaternary structure, homodimer.

It is found in the cytoplasm. It catalyses the reaction pseudouridine(1915) in 23S rRNA + S-adenosyl-L-methionine = N(3)-methylpseudouridine(1915) in 23S rRNA + S-adenosyl-L-homocysteine + H(+). Specifically methylates the pseudouridine at position 1915 (m3Psi1915) in 23S rRNA. The protein is Ribosomal RNA large subunit methyltransferase H of Lysinibacillus sphaericus (strain C3-41).